The sequence spans 916 residues: Calcium homeostasis endoplasmic reticulum protein (916 aa).

Position 1 is an N-acetylmethionine (methionine 1). One copy of the SURP motif repeat lies at 15 to 57 (VIDKLAQFVARNGPEFEKMTMEKQKDNPKFSFLFGGEFYSYYK). Lysine 18 is modified (N6-acetyllysine). Residues 149 to 289 (ETQLDMNEFD…QLQSPALGLG (141 aa)) form the CID domain. Disordered stretches follow at residues 336 to 549 (QQQQ…RFPP) and 601 to 635 (HPPWAGPQHPDFGPPPHGFNGQPPHMRRQGPPHIN). The span at 354-374 (TPPPPAPPPAPAPAPAIPPTT) shows a compositional bias: pro residues. Over residues 480–501 (WNNQPDAAWNSQFEGPWNSQHE) the composition is skewed to polar residues. Residues 525–541 (PFPPHQQHPQFNQPPHP) show a composition bias toward pro residues. At tyrosine 714 the chain carries Phosphotyrosine. The tract at residues 722 to 878 (RARRRKGQEK…DPIKGGDVRD (157 aa)) is disordered. Basic residues predominate over residues 739 to 749 (SRSRSKSRGRS). Over residues 750 to 766 (SSRSNSRSSKSSGSYSR) the composition is skewed to low complexity. Residues 767-815 (SRSRSCSRSYSRSRSRSRSRSRSSRSRSRSQSRSRSKSYSPGRRRRSRS) are compositionally biased toward basic residues. A phosphoserine mark is found at serine 813, serine 815, and serine 817. Threonine 819 is subject to Phosphothreonine. Serine 828 carries the post-translational modification Phosphoserine. Residues 841-891 (EENKGHQMLVKMGWSGSGGLGAKEQGIQDPIKGGDVRDKWDQYKGVGVALD) form the G-patch domain. Lysine 844 participates in a covalent cross-link: Glycyl lysine isopeptide (Lys-Gly) (interchain with G-Cter in SUMO2). Phosphoserine is present on residues serine 855 and serine 857. A Glycyl lysine isopeptide (Lys-Gly) (interchain with G-Cter in SUMO2) cross-link involves residue lysine 872. An N6-acetyllysine modification is found at lysine 879. Serine 904 carries the post-translational modification Phosphoserine.

In terms of tissue distribution, expressed in brain, placenta, lung, liver, kidney, pancreas, cardiac and skeletal muscle, and in cultured HEL and Dami cells.

The protein resides in the cytoplasm. It localises to the perinuclear region. The protein localises to the endoplasmic reticulum. Functionally, involved in calcium homeostasis, growth and proliferation. This Homo sapiens (Human) protein is Calcium homeostasis endoplasmic reticulum protein.